The primary structure comprises 424 residues: MPPKKHSGFMMFVNEWRDNNPEGRNLSIAQAVSRCGSIWEKMTAQQRGPYNSGAKNADVLTRVKKERLNCHGQVLSQVELEEREMAESQINMKRCTERIVMDAKRSHDLENTKFVFVAFNYFTKALTTDVYVPAEFSASEYSFNEGIMSVYSTLIDPGQIIFGQGSDAQHHSSTTHNLPLPPNALGEKNMGKLYRNILEYLSKIQEGKDATKPFVVFTKTDMVPVVKSCFRYLACENQDGSYENGDQIQVLDIQYLLFILKKEVLDIAGVSDEKINLYVTDAYFLKDFFEFTPEISCQYHEENDRSKYCTQSLVMRWAYTFSDYMCSDLAISVQPGKHIPPKTKPNYRFYRQPPAGDHLHHPLTCQQTILRLLATLTRKTNFHLSVGGEPPTVALVPSDLTLWDPGIYPLTPVPFMTFLTTTLV.

Positions 2 to 69 (PPKKHSGFMM…LTRVKKERLN (68 aa)) form a DNA-binding region, HMG box.

This sequence belongs to the maelstrom family.

The protein resides in the cytoplasm. The protein localises to the nucleus. In terms of biological role, involved both in the piRNA and miRNA metabolic processes. As a component of the meiotic nuage, plays a central role during oogenesis by repressing transposable elements and preventing their mobilization, which is essential for the germline integrity. Repression of transposable elements is mediated via the piRNA metabolic process, which mediates the repression of transposable elements during meiosis by forming complexes composed of piRNAs and Piwi proteins and governs the repression of transposons. As a nuclear component, it is required for proper differentiation in the germline stem cell (GSC) lineage by repressing microRNA-7 (miR-7), thereby acting as an indirect regulator of bag-of-marbles (Bam). Acts by binding to the promoter of miR-7 gene and repressing its expression; miR-7 repression alleviates the Bam repression by miR-7, thereby allowing differentiation in the germline stem cell (GSC) lineage. The sequence is that of Protein maelstrom 1 (mael1) from Drosophila ananassae (Fruit fly).